Here is a 196-residue protein sequence, read N- to C-terminus: Transmembrane protein 126A (196 aa).

Over 1 to 34 (MENHKSNNTKENITIVDISRKINQLPEAERNLLE) the chain is Mitochondrial matrix. The chain crosses the membrane as a helical span at residues 35–55 (HGSVYVGLNAALCGLIANSLF). At 56–57 (RR) the chain is on the mitochondrial intermembrane side. The chain crosses the membrane as a helical span at residues 58–78 (ILNVTKARIAAGLPMAWIPFL). Over 79–107 (TTDITYRCFVSFPLNTGDLDCETCTITRS) the chain is Mitochondrial matrix. The chain crosses the membrane as a helical span at residues 108-128 (GLIGLVIGGLYPVFLAIPVNG). Over 129 to 159 (GLAARYQSALLPHKGNILSYWIRTSKPVFRK) the chain is Mitochondrial intermembrane. The chain crosses the membrane as a helical span at residues 160 to 176 (MLFPIMLQTMFSAYLGS). Residues 177–196 (EQYKLLIKALQLSEPGKEIH) are Mitochondrial matrix-facing.

It belongs to the TMEM126 family. As to quaternary structure, interacts with OXA1L; promoting cotranslational quality control in mitochondria.

Its subcellular location is the mitochondrion inner membrane. In terms of biological role, protein required for the cotranslational protein quality control in the inner membrane of the mitochondria. Associates with newly synthesized polypeptides and may act as a chaperone that cooperates with OXA1L for the insertion of newly synthesized mitochondrial proteins into the inner membrane. Required for the assembly of the ND4 module of mitochondrial complex I. The sequence is that of Transmembrane protein 126A (TMEM126A) from Pongo abelii (Sumatran orangutan).